The following is a 330-amino-acid chain: Malate dehydrogenase (330 aa).

12 to 18 lines the NAD(+) pocket; that stretch reads GAAGQIG. Residues Arg93 and Arg99 each contribute to the substrate site. NAD(+) is bound by residues Asn106, Gln113, and 130-132; that span reads VGN. Residues Asn132 and Arg163 each contribute to the substrate site. His188 (proton acceptor) is an active-site residue.

It belongs to the LDH/MDH superfamily. MDH type 2 family.

The catalysed reaction is (S)-malate + NAD(+) = oxaloacetate + NADH + H(+). In terms of biological role, catalyzes the reversible oxidation of malate to oxaloacetate. This is Malate dehydrogenase from Legionella pneumophila subsp. pneumophila (strain Philadelphia 1 / ATCC 33152 / DSM 7513).